Reading from the N-terminus, the 364-residue chain is tRNA-specific 2-thiouridylase MnmA (364 aa).

Residues 12-19 (GISGGVDS) and M38 contribute to the ATP site. The interval 98–100 (NPD) is interaction with target base in tRNA. The Nucleophile role is filled by C103. C103 and C199 are oxidised to a cystine. G127 is a binding site for ATP. Residues 149 to 151 (KEQ) are interaction with tRNA. Residue C199 is the Cysteine persulfide intermediate of the active site. The interaction with tRNA stretch occupies residues 311-312 (RY).

The protein belongs to the MnmA/TRMU family.

It is found in the cytoplasm. The catalysed reaction is S-sulfanyl-L-cysteinyl-[protein] + uridine(34) in tRNA + AH2 + ATP = 2-thiouridine(34) in tRNA + L-cysteinyl-[protein] + A + AMP + diphosphate + H(+). In terms of biological role, catalyzes the 2-thiolation of uridine at the wobble position (U34) of tRNA, leading to the formation of s(2)U34. This Hahella chejuensis (strain KCTC 2396) protein is tRNA-specific 2-thiouridylase MnmA.